The chain runs to 839 residues: Probable alpha-glucuronidase A (839 aa).

Residues 1-18 (MRWSFLTVLLWLVSLTGA) form the signal peptide. N-linked (GlcNAc...) asparagine glycans are attached at residues Asn49, Asn101, Asn148, Asn221, Asn278, Asn309, Asn342, Asn464, Asn526, Asn575, Asn681, and Asn731.

Belongs to the glycosyl hydrolase 67 family.

Its subcellular location is the secreted. The enzyme catalyses an alpha-D-glucuronoside + H2O = D-glucuronate + an alcohol. Alpha-glucuronidase involved in the hydrolysis of xylan, a major structural heterogeneous polysaccharide found in plant biomass representing the second most abundant polysaccharide in the biosphere, after cellulose. Releases 4-O-methylglucuronic acid from xylan. The protein is Probable alpha-glucuronidase A (aguA) of Aspergillus flavus (strain ATCC 200026 / FGSC A1120 / IAM 13836 / NRRL 3357 / JCM 12722 / SRRC 167).